A 1486-amino-acid polypeptide reads, in one-letter code: Alsin homolog (1486 aa).

RCC1 repeat units follow at residues 147-201 (QGVV…MLVA), 256-307 (HTQL…ARTL), and 308-363 (DGRL…LLNA). MORN repeat units follow at residues 744 to 765 (CGTW…DGSV), 766 to 784 (YCGE…MVIP), 789 to 804 (YVGN…HGVY), 817 to 832 (YEGN…HGVM), 839 to 853 (YVGE…GYGV), and 863 to 884 (YMGM…NRGD). The VPS9 domain occupies 1333-1486 (SRKDEMYRQN…VTSRALQKIP (154 aa)).

As to expression, in the embryo, expressed in a wide range of tissues including the epidermis and the ventral nerve cord.

Its function is as follows. Has guanine nucleotide exchange factor (GEF) activity towards Rab5. Promotes the exchange of GDP to GTP, converting inactive GDP-bound Rab5 into its active GTP-bound form. This Drosophila melanogaster (Fruit fly) protein is Alsin homolog.